The primary structure comprises 1362 residues: DNA-directed RNA polymerase subunit beta'' (1362 aa).

4 residues coordinate Zn(2+): cysteine 224, cysteine 295, cysteine 302, and cysteine 305.

It belongs to the RNA polymerase beta' chain family. RpoC2 subfamily. In plastids the minimal PEP RNA polymerase catalytic core is composed of four subunits: alpha, beta, beta', and beta''. When a (nuclear-encoded) sigma factor is associated with the core the holoenzyme is formed, which can initiate transcription. Zn(2+) serves as cofactor.

The protein localises to the plastid. It is found in the chloroplast. It carries out the reaction RNA(n) + a ribonucleoside 5'-triphosphate = RNA(n+1) + diphosphate. In terms of biological role, DNA-dependent RNA polymerase catalyzes the transcription of DNA into RNA using the four ribonucleoside triphosphates as substrates. The protein is DNA-directed RNA polymerase subunit beta'' of Helianthus annuus (Common sunflower).